The sequence spans 225 residues: Glutathione S-transferase A (225 aa).

The 83-residue stretch at 3–85 (KDMTLLWGSG…YLESQFKSQG (83 aa)) folds into the GST N-terminal domain. Glutathione is bound at residue Arg18. In terms of domain architecture, GST C-terminal spans 92 to 217 (CPAEQAMMYQ…WPPTWLESPQ (126 aa)).

It belongs to the GST superfamily. Theta family. In terms of assembly, homodimer. In terms of tissue distribution, found in all the tissues examined. Highest values found in liver and in intestinal mucosa.

The protein localises to the cytoplasm. The catalysed reaction is RX + glutathione = an S-substituted glutathione + a halide anion + H(+). Its function is as follows. Conjugation of reduced glutathione to a wide number of exogenous and endogenous hydrophobic electrophiles. The chain is Glutathione S-transferase A from Pleuronectes platessa (European plaice).